Here is a 148-residue protein sequence, read N- to C-terminus: Lysozyme-like protein 6 (148 aa).

The N-terminal stretch at 1 to 19 (MTSPLLISLASCLVAVNQA) is a signal peptide. One can recognise a C-type lysozyme domain in the interval 20-148 (SLIGRCDLAK…SYWMTGCHLA (129 aa)). Intrachain disulfides connect C25/C145, C49/C133, C83/C98, and C94/C112. Residues E54 and D71 contribute to the active site.

The protein belongs to the glycosyl hydrolase 22 family. In terms of assembly, monomer.

The protein resides in the secreted. The protein localises to the cell surface. It is found in the cell projection. Its subcellular location is the cilium. It localises to the flagellum. It catalyses the reaction Hydrolysis of (1-&gt;4)-beta-linkages between N-acetylmuramic acid and N-acetyl-D-glucosamine residues in a peptidoglycan and between N-acetyl-D-glucosamine residues in chitodextrins.. Functionally, may be involved sperm-egg plasma membrane adhesion and fusion during fertilization. Exhibits bacteriolytic activity in vitro against Micrococcus luteus and Staphylococcus aureus. Shows weak bacteriolytic activity against Gram-positive bacteria at physiological pH. Bacteriolytic activity is pH-dependent, with a maximum at around pH 5.6. The chain is Lysozyme-like protein 6 (LYZL6) from Bos taurus (Bovine).